The chain runs to 449 residues: Exodeoxyribonuclease 7 large subunit (449 aa).

Belongs to the XseA family. As to quaternary structure, heterooligomer composed of large and small subunits.

Its subcellular location is the cytoplasm. It carries out the reaction Exonucleolytic cleavage in either 5'- to 3'- or 3'- to 5'-direction to yield nucleoside 5'-phosphates.. Bidirectionally degrades single-stranded DNA into large acid-insoluble oligonucleotides, which are then degraded further into small acid-soluble oligonucleotides. This chain is Exodeoxyribonuclease 7 large subunit, found in Aliivibrio fischeri (strain MJ11) (Vibrio fischeri).